A 173-amino-acid polypeptide reads, in one-letter code: Disulfide bond formation protein B (173 aa).

The Cytoplasmic portion of the chain corresponds to 1–16 (MRILSSLKTFSQSRLS). The chain crosses the membrane as a helical span at residues 17–33 (WLLLLAFVVFFTLCAMY). The Periplasmic segment spans residues 34–51 (FQHVMLLAPCVMCIYERI). A disulfide bond links C43 and C46. Residues 52 to 67 (AMLGIGVAALIGAIAP) form a helical membrane-spanning segment. Residues 68-74 (QNPVVRW) lie on the Cytoplasmic side of the membrane. A helical transmembrane segment spans residues 75–92 (LGFAAWGASSYKGLMLAI). The Periplasmic portion of the chain corresponds to 93–147 (EHVNYQFNPSPFATCDLFVTFPAWAPLNQWAPNLFEAYGDCSKVVWQFLTLSMPQ). C107 and C133 form a disulfide bridge. Residues 148 to 166 (WLVVIFAANLLALAIFVVA) form a helical membrane-spanning segment. At 167 to 173 (QLAKTSR) the chain is on the cytoplasmic side.

The protein belongs to the DsbB family.

The protein localises to the cell inner membrane. In terms of biological role, required for disulfide bond formation in some periplasmic proteins. Acts by oxidizing the DsbA protein. The sequence is that of Disulfide bond formation protein B from Vibrio cholerae serotype O1 (strain ATCC 39315 / El Tor Inaba N16961).